The following is a 278-amino-acid chain: Probable aquaporin PIP2-8 (278 aa).

Position 1 is an N-acetylmethionine (Met-1). The Cytoplasmic segment spans residues 1–36 (MSKEVSEEGRHGKDYVDPPPAPLLDMAELKLWSFYR). The residue at position 3 (Lys-3) is an N6,N6-dimethyllysine. A helical transmembrane segment spans residues 37 to 57 (AIIAEFIATLLFLYVTVATVI). Residues 58–74 (GHKNQTGPCGGVGLLGI) lie on the Extracellular side of the membrane. Residues 75–95 (AWAFGGMIFVLVYCTAGISGG) form a helical membrane-spanning segment. The Cytoplasmic segment spans residues 96 to 116 (HINPAVTFGLFLARKVSLPRA). Residues 98–100 (NPA) carry the NPA 1 motif. Residues 117 to 137 (VAYMVAQCLGAICGVGLVKAF) traverse the membrane as a helical segment. Over 138 to 158 (MMTPYKRLGGGANTVADGYST) the chain is Extracellular. Residues 159–179 (GTALGAEIIGTFVLVYTVFSA) form a helical membrane-spanning segment. Over 180-192 (TDPKRSARDSHVP) the chain is Cytoplasmic. A helical membrane pass occupies residues 193-213 (VLAPLPIGFAVFMVHLATIPI). The Extracellular segment spans residues 214-240 (TGTGINPARSFGAAVIYNNEKAWDDHW). The NPA 2 motif lies at 219-221 (NPA). The chain crosses the membrane as a helical span at residues 241–261 (IFWVGPFVGALAAAAYHQYIL). Residues 262 to 278 (RAAAIKALASFRSNPTN) lie on the Cytoplasmic side of the membrane. Residues Ser-271 and Ser-274 each carry the phosphoserine modification.

This sequence belongs to the MIP/aquaporin (TC 1.A.8) family. PIP (TC 1.A.8.11) subfamily. Expressed in roots and floral buds.

It localises to the cell membrane. Its function is as follows. Aquaporins facilitate the transport of water and small neutral solutes across cell membranes. The chain is Probable aquaporin PIP2-8 (PIP2-8) from Arabidopsis thaliana (Mouse-ear cress).